The primary structure comprises 243 residues: MAGHSKWANIQHRKGRQDAKRGKLWTKIIREITVAARAGGADPDSNPRLRMAWDKATDANMPKDNIQRAIQRGAGGADGESYEEVRYEGYGIGGAAVIVDCMTDNRTRTVAEVRHAFAKHGGNLGQEGSVAFMFKHCGQFVFAPGTSEEAVMEAALEAGAEDIATDEEGVIEVVCAPADFTAVRQAFEAAGLKAEVDGVVMKALNETELTGEDAVKMQKLLDVLESLDDVQEVYTNVVFDEAQ.

The segment at 1 to 21 is disordered; it reads MAGHSKWANIQHRKGRQDAKR.

It belongs to the TACO1 family.

Its subcellular location is the cytoplasm. This is Probable transcriptional regulatory protein BPP2422 from Bordetella parapertussis (strain 12822 / ATCC BAA-587 / NCTC 13253).